A 135-amino-acid chain; its full sequence is Large ribosomal subunit protein uL16c (135 aa).

This sequence belongs to the universal ribosomal protein uL16 family. As to quaternary structure, part of the 50S ribosomal subunit.

It localises to the plastid. The protein resides in the chloroplast. This is Large ribosomal subunit protein uL16c from Gossypium barbadense (Sea Island cotton).